Reading from the N-terminus, the 665-residue chain is Methionine--tRNA ligase (665 aa).

A 'HIGH' region motif is present at residues 13–23 (YYPSGKLHIGS). The 'KMSKS' region motif lies at 309–313 (KMSKS). Residue K312 coordinates ATP. Residues 562 to 665 (DFDKVEIRVA…PAVPNGSVIG (104 aa)) form the tRNA-binding domain.

This sequence belongs to the class-I aminoacyl-tRNA synthetase family. MetG type 2B subfamily. As to quaternary structure, homodimer.

The protein localises to the cytoplasm. It catalyses the reaction tRNA(Met) + L-methionine + ATP = L-methionyl-tRNA(Met) + AMP + diphosphate. Is required not only for elongation of protein synthesis but also for the initiation of all mRNA translation through initiator tRNA(fMet) aminoacylation. In Streptococcus pneumoniae serotype 4 (strain ATCC BAA-334 / TIGR4), this protein is Methionine--tRNA ligase (metG).